A 257-amino-acid chain; its full sequence is Glucose-1-phosphate cytidylyltransferase (257 aa).

Substrate contacts are provided by residues 6 to 10 (LAGGL), 11 to 13 (GTR), Lys-23, Ser-104, Arg-109, and Gly-128. The Mg(2+) site is built by Asp-129 and Asp-234.

It belongs to the glucose-1-phosphate cytidylyltransferase family. As to quaternary structure, homohexamer. Requires Mg(2+) as cofactor.

It catalyses the reaction alpha-D-glucose 1-phosphate + CTP + H(+) = CDP-D-glucose + diphosphate. It functions in the pathway nucleotide-sugar biosynthesis; CDP-3,6-dideoxy-D-mannose biosynthesis; CDP-3,6-dideoxy-D-mannose from CTP and alpha-D-glucose 1-phosphate: step 1/5. The protein operates within bacterial outer membrane biogenesis; LPS O-antigen biosynthesis. Functionally, involved in the biosynthesis of the tyvelose, a 3,6-dideoxyhexose found in the O-antigen of the surface lipopolysaccharides. It catalyzes the transfer of a CMP moiety from CTP to glucose 1-phosphate. This enzyme can utilize either CTP or UTP as the nucleotide donor. The polypeptide is Glucose-1-phosphate cytidylyltransferase (rfbF) (Salmonella typhi).